The primary structure comprises 105 residues: Heat shock protein HspQ (105 aa).

It belongs to the HspQ family.

It localises to the cytoplasm. Involved in the degradation of certain denaturated proteins, including DnaA, during heat shock stress. The polypeptide is Heat shock protein HspQ (Klebsiella pneumoniae (strain 342)).